A 353-amino-acid chain; its full sequence is Mitochondrial import inner membrane translocase subunit TIM50 (353 aa).

A mitochondrion-targeting transit peptide spans 1 to 44 (MAASAAVFSRLRSGLRLGSRGLCTRLATPPRRAPDQAAEIGSRG). The interval 25–60 (RLATPPRRAPDQAAEIGSRGSTKAQGPQQQPGSEGP) is disordered. The residue at position 45 (S45) is a Phosphoserine. Residues 45 to 65 (STKAQGPQQQPGSEGPSYAKK) lie on the Mitochondrial matrix side of the membrane. Positions 49–60 (QGPQQQPGSEGP) are enriched in low complexity. Residues 66–86 (VALWLAGLLGAGGTVSVVYIF) form a helical membrane-spanning segment. The Mitochondrial intermembrane segment spans residues 87–353 (GNNPVDENGA…SRLWPRSKQP (267 aa)). Residues 143–286 (YYQPPYTLVL…LDLSAFLKTI (144 aa)) enclose the FCP1 homology domain. Phosphoserine is present on S341.

It belongs to the TIM50 family. Component of the TIM23 complex at least composed of TIMM23, TIMM17 (TIMM17A or TIMM17B) and TIMM50; within this complex, directly interacts with TIMM23. The complex interacts with the TIMM44 component of the PAM complex and with DNAJC15. In terms of assembly, interacts with COIL and snRNPs. As to expression, widely expressed. Expressed at higher level in brain, kidney and liver (at protein level).

It localises to the mitochondrion inner membrane. The protein resides in the nucleus speckle. Its function is as follows. Essential component of the TIM23 complex, a complex that mediates the translocation of transit peptide-containing proteins across the mitochondrial inner membrane. Has some phosphatase activity in vitro; however such activity may not be relevant in vivo. May participate in the release of snRNPs and SMN from the Cajal body. The protein is Mitochondrial import inner membrane translocase subunit TIM50 (TIMM50) of Homo sapiens (Human).